The primary structure comprises 67 residues: MNFYKYLVVLVVLVLCLSATQTEARGFRKHFNKLVKKVKHTISETAHVAKDTAVIAGSGAAVVAATG.

The signal sequence occupies residues M1–A24. At T66 the chain carries Threonine amide.

In terms of tissue distribution, constitutively expressed in the adult anterior midgut; proventriculus, thoracic and reservoir regions.

The protein localises to the secreted. Its function is as follows. Has antimicrobial activity against most Gram-positive and Gram-negative bacteria, filamentous fungi and yeasts tested. Has trypanolytic effect on T.b.rhodesiense and limited hemolytic activity against bovine red blood cells. In terms of biological role, may play an important role in protecting the stored blood in the anterior midgut from microorganisms prior to digestion. Adopts an amphipathic alpha-helical structure only in the presence of an organic solvent that mimics a phospholipid membrane. This chain is Stomoxyn, found in Stomoxys calcitrans (Stable fly).